Reading from the N-terminus, the 504-residue chain is ATP synthase subunit alpha, chloroplastic (504 aa).

Residue 170 to 177 participates in ATP binding; the sequence is GDRQTGKT.

This sequence belongs to the ATPase alpha/beta chains family. F-type ATPases have 2 components, CF(1) - the catalytic core - and CF(0) - the membrane proton channel. CF(1) has five subunits: alpha(3), beta(3), gamma(1), delta(1), epsilon(1). CF(0) has four main subunits: a, b, b' and c.

Its subcellular location is the plastid. It localises to the chloroplast thylakoid membrane. It catalyses the reaction ATP + H2O + 4 H(+)(in) = ADP + phosphate + 5 H(+)(out). Produces ATP from ADP in the presence of a proton gradient across the membrane. The alpha chain is a regulatory subunit. This chain is ATP synthase subunit alpha, chloroplastic, found in Jasminum nudiflorum (Winter jasmine).